A 451-amino-acid polypeptide reads, in one-letter code: Enolase (451 aa).

Glutamine 167 contacts (2R)-2-phosphoglycerate. The active-site Proton donor is the glutamate 209. Aspartate 250, glutamate 307, and aspartate 334 together coordinate Mg(2+). 4 residues coordinate (2R)-2-phosphoglycerate: lysine 359, arginine 388, serine 389, and lysine 410. Lysine 359 functions as the Proton acceptor in the catalytic mechanism.

It belongs to the enolase family. The cofactor is Mg(2+).

Its subcellular location is the cytoplasm. The protein resides in the secreted. It localises to the cell surface. The catalysed reaction is (2R)-2-phosphoglycerate = phosphoenolpyruvate + H2O. It participates in carbohydrate degradation; glycolysis; pyruvate from D-glyceraldehyde 3-phosphate: step 4/5. Catalyzes the reversible conversion of 2-phosphoglycerate (2-PG) into phosphoenolpyruvate (PEP). It is essential for the degradation of carbohydrates via glycolysis. This chain is Enolase, found in Mesomycoplasma hyopneumoniae (strain J / ATCC 25934 / NCTC 10110) (Mycoplasma hyopneumoniae).